Here is a 348-residue protein sequence, read N- to C-terminus: D-erythrose-4-phosphate dehydrogenase (348 aa).

Position 12–13 (12–13) interacts with NAD(+); sequence RI. Residues 154–156, arginine 200, 213–214, and arginine 236 contribute to the substrate site; these read SCT and TR. The Nucleophile role is filled by cysteine 155. Asparagine 318 contacts NAD(+).

The protein belongs to the glyceraldehyde-3-phosphate dehydrogenase family. Epd subfamily. As to quaternary structure, homotetramer.

The protein localises to the cytoplasm. It catalyses the reaction D-erythrose 4-phosphate + NAD(+) + H2O = 4-phospho-D-erythronate + NADH + 2 H(+). It functions in the pathway cofactor biosynthesis; pyridoxine 5'-phosphate biosynthesis; pyridoxine 5'-phosphate from D-erythrose 4-phosphate: step 1/5. Its function is as follows. Catalyzes the NAD-dependent conversion of D-erythrose 4-phosphate to 4-phosphoerythronate. The chain is D-erythrose-4-phosphate dehydrogenase from Erwinia tasmaniensis (strain DSM 17950 / CFBP 7177 / CIP 109463 / NCPPB 4357 / Et1/99).